Consider the following 266-residue polypeptide: Phosphate import ATP-binding protein PstB 2 (266 aa).

One can recognise an ABC transporter domain in the interval 13-252; that stretch reads LEAQGVNVYY…GPTEEIFQNP (240 aa). 45-52 is an ATP binding site; sequence GPSGCGKS.

It belongs to the ABC transporter superfamily. Phosphate importer (TC 3.A.1.7) family. As to quaternary structure, the complex is composed of two ATP-binding proteins (PstB), two transmembrane proteins (PstC and PstA) and a solute-binding protein (PstS).

Its subcellular location is the cell inner membrane. It carries out the reaction phosphate(out) + ATP + H2O = ADP + 2 phosphate(in) + H(+). Part of the ABC transporter complex PstSACB involved in phosphate import. Responsible for energy coupling to the transport system. This is Phosphate import ATP-binding protein PstB 2 from Synechocystis sp. (strain ATCC 27184 / PCC 6803 / Kazusa).